Consider the following 325-residue polypeptide: Leucine carboxyl methyltransferase 1 (325 aa).

Residues Arg79, Gly104, Asp127, 174 to 175 (DL), and Glu200 contribute to the S-adenosyl-L-methionine site.

It belongs to the methyltransferase superfamily. LCMT family.

The catalysed reaction is [phosphatase 2A protein]-C-terminal L-leucine + S-adenosyl-L-methionine = [phosphatase 2A protein]-C-terminal L-leucine methyl ester + S-adenosyl-L-homocysteine. Methylates the carboxyl group of the C-terminal leucine residue of protein phosphatase 2A catalytic subunits to form alpha-leucine ester residues. This is Leucine carboxyl methyltransferase 1 (PPM1) from Eremothecium gossypii (strain ATCC 10895 / CBS 109.51 / FGSC 9923 / NRRL Y-1056) (Yeast).